The following is a 359-amino-acid chain: Peptide chain release factor 1 (359 aa).

N5-methylglutamine is present on glutamine 234. The disordered stretch occupies residues 283–305 (SQKDAARAADRRAQVGSGDRSER).

Belongs to the prokaryotic/mitochondrial release factor family. In terms of processing, methylated by PrmC. Methylation increases the termination efficiency of RF1.

It localises to the cytoplasm. In terms of biological role, peptide chain release factor 1 directs the termination of translation in response to the peptide chain termination codons UAG and UAA. The chain is Peptide chain release factor 1 from Methylobacterium sp. (strain 4-46).